The sequence spans 142 residues: UPF0102 protein Bamb_0202 (142 aa).

Residues 1–23 (MCHAAPAAPASGRGLPHGGGNFS) form a disordered region.

The protein belongs to the UPF0102 family.

This is UPF0102 protein Bamb_0202 from Burkholderia ambifaria (strain ATCC BAA-244 / DSM 16087 / CCUG 44356 / LMG 19182 / AMMD) (Burkholderia cepacia (strain AMMD)).